Reading from the N-terminus, the 536-residue chain is Inactive phospholipase D5 (536 aa).

Residues 1–68 (MEIRQHEWLS…DKLEHSQQKC (68 aa)) lie on the Cytoplasmic side of the membrane. The helical transmembrane segment at 69-89 (IVIFALVCCFAVLVALIFSAV) threads the bilayer. At 90-536 (DIMGEDEDGL…NATGREPLSV (447 aa)) the chain is on the extracellular side. The N-linked (GlcNAc...) asparagine glycan is linked to Asn-121. The region spanning 215-242 (NKGRLQSSFWIVDKQHVYIGSAGLDWRS) is the PLD phosphodiesterase 1 domain. Residue Asn-302 is glycosylated (N-linked (GlcNAc...) asparagine). A PLD phosphodiesterase 2 domain is found at 434-460 (FPKLNRNKYMVTDGAAYIGNFDWVGND). A disordered region spans residues 503–536 (QPTKQPNCSSLSKLKSPSKQPAMANATGREPLSV). Residues 511–521 (SSLSKLKSPSK) show a composition bias toward low complexity.

It belongs to the phospholipase D family.

The protein resides in the membrane. The protein is Inactive phospholipase D5 (Pld5) of Mus musculus (Mouse).